Reading from the N-terminus, the 1080-residue chain is Carbamoyl phosphate synthase large chain (1080 aa).

Positions 1-403 (MPKRTDLRTI…SLQKAVRGLE (403 aa)) are carboxyphosphate synthetic domain. Residues arginine 129, arginine 169, glycine 175, glycine 176, glutamate 208, valine 210, glutamate 215, glycine 241, valine 242, histidine 243, glutamine 285, and glutamate 299 each contribute to the ATP site. The 196-residue stretch at 133 to 328 (RVAMQEIGLE…IAKIAAKLAV (196 aa)) folds into the ATP-grasp 1 domain. Positions 285, 299, and 301 each coordinate Mg(2+). Positions 285, 299, and 301 each coordinate Mn(2+). Residues 404-554 (TGKVGLEPTG…YSTYEEECEA (151 aa)) form an oligomerization domain region. Residues 555 to 942 (APSDRRKIMI…AFARAQEAGD (388 aa)) form a carbamoyl phosphate synthetic domain region. Positions 679–876 (QKLVQQLGLR…LAKIAARCMT (198 aa)) constitute an ATP-grasp 2 domain. Arginine 715, arginine 754, leucine 756, glutamate 761, glycine 787, valine 788, histidine 789, serine 790, glutamine 830, and glutamate 847 together coordinate ATP. Mg(2+)-binding residues include glutamine 830, glutamate 847, and asparagine 849. Positions 830, 847, and 849 each coordinate Mn(2+). The MGS-like domain maps to 943–1080 (IRAPQPGRAF…LQELHKELQV (138 aa)). The segment at 943–1080 (IRAPQPGRAF…LQELHKELQV (138 aa)) is allosteric domain.

Belongs to the CarB family. As to quaternary structure, composed of two chains; the small (or glutamine) chain promotes the hydrolysis of glutamine to ammonia, which is used by the large (or ammonia) chain to synthesize carbamoyl phosphate. Tetramer of heterodimers (alpha,beta)4. It depends on Mg(2+) as a cofactor. Requires Mn(2+) as cofactor.

It carries out the reaction hydrogencarbonate + L-glutamine + 2 ATP + H2O = carbamoyl phosphate + L-glutamate + 2 ADP + phosphate + 2 H(+). The catalysed reaction is hydrogencarbonate + NH4(+) + 2 ATP = carbamoyl phosphate + 2 ADP + phosphate + 2 H(+). Its pathway is amino-acid biosynthesis; L-arginine biosynthesis; carbamoyl phosphate from bicarbonate: step 1/1. It functions in the pathway pyrimidine metabolism; UMP biosynthesis via de novo pathway; (S)-dihydroorotate from bicarbonate: step 1/3. Large subunit of the glutamine-dependent carbamoyl phosphate synthetase (CPSase). CPSase catalyzes the formation of carbamoyl phosphate from the ammonia moiety of glutamine, carbonate, and phosphate donated by ATP, constituting the first step of 2 biosynthetic pathways, one leading to arginine and/or urea and the other to pyrimidine nucleotides. The large subunit (synthetase) binds the substrates ammonia (free or transferred from glutamine from the small subunit), hydrogencarbonate and ATP and carries out an ATP-coupled ligase reaction, activating hydrogencarbonate by forming carboxy phosphate which reacts with ammonia to form carbamoyl phosphate. The sequence is that of Carbamoyl phosphate synthase large chain from Xylella fastidiosa (strain 9a5c).